The chain runs to 391 residues: Pectin acetylesterase 11 (391 aa).

An N-terminal signal peptide occupies residues 1 to 23 (MTWLKQMWSSILVLAVVVIGARA). Active-site charge relay system residues include Ser-171, Asp-267, and His-334.

Belongs to the pectinacetylesterase family.

It is found in the secreted. The protein localises to the cell wall. Its function is as follows. Hydrolyzes acetyl esters in homogalacturonan regions of pectin. In type I primary cell wall, galacturonic acid residues of pectin can be acetylated at the O-2 and O-3 positions. Decreasing the degree of acetylation of pectin gels in vitro alters their physical properties. This Arabidopsis thaliana (Mouse-ear cress) protein is Pectin acetylesterase 11.